We begin with the raw amino-acid sequence, 334 residues long: D-alanine--D-alanine ligase (334 aa).

Residues 114 to 314 (KRIWRFEGLP…YEELCLRILA (201 aa)) enclose the ATP-grasp domain. 140–195 (LEDLGSPMIVKPSREGSTIGLTKVTSPGQCEQAYRLASRYDPEVLCEQFIEGEETT) contributes to the ATP binding site. The Mg(2+) site is built by aspartate 267, glutamate 281, and asparagine 283.

It belongs to the D-alanine--D-alanine ligase family. Requires Mg(2+) as cofactor. Mn(2+) serves as cofactor.

The protein localises to the cytoplasm. It catalyses the reaction 2 D-alanine + ATP = D-alanyl-D-alanine + ADP + phosphate + H(+). Its pathway is cell wall biogenesis; peptidoglycan biosynthesis. In terms of biological role, cell wall formation. The sequence is that of D-alanine--D-alanine ligase from Paracidovorax citrulli (strain AAC00-1) (Acidovorax citrulli).